Consider the following 312-residue polypeptide: tRNA dimethylallyltransferase (312 aa).

Residue Gly18–Ser25 participates in ATP binding. Residue Thr20–Ser25 coordinates substrate. 2 interaction with substrate tRNA regions span residues Asp43 to Gln46 and Gln167 to Arg171.

Belongs to the IPP transferase family. Monomer. Mg(2+) serves as cofactor.

It carries out the reaction adenosine(37) in tRNA + dimethylallyl diphosphate = N(6)-dimethylallyladenosine(37) in tRNA + diphosphate. In terms of biological role, catalyzes the transfer of a dimethylallyl group onto the adenine at position 37 in tRNAs that read codons beginning with uridine, leading to the formation of N6-(dimethylallyl)adenosine (i(6)A). The protein is tRNA dimethylallyltransferase of Azorhizobium caulinodans (strain ATCC 43989 / DSM 5975 / JCM 20966 / LMG 6465 / NBRC 14845 / NCIMB 13405 / ORS 571).